A 494-amino-acid chain; its full sequence is MNATRKAARLRVLFATPECAPWAKTGGLGDVSASLPAALAALGLDVCVLLPGYPSVRQAARNARKVADIRSAHGLPSARLLRGRLPSGVPALVLDCPSLYRREGGPYQDGEGVDYTDNALRFGLLSHVAARLASAASPLVWRADILHCNDWPTALAPAYLKLGLPGAAPSLIVVHNLAFQGIFPLDVAERLGLPPESLKSEGVEYWGKLSFLKAGLYYADRIVAVSPTYAREIRTEAHGCGMQGLLETRANRLAGILNGIDMDAWNPRTDPHLDTNYDADTLEDKAPNKRALQAELGLAADDDALLLGMVTRLTDQKGIDLVLDALPELLARPVQLALLGGGDARFEQAWRQRAAARPDRIAAVIGFDERLAHRIEAGADAFVMPSRFEPCGLNQMYSQRYGTPPIVRATGGLVDSVGDFSVDGLHRGEASGFLFAEATPAALVEAVDRALKVFADRVAWRTLCCNGMARDFSWGGSAGRYARLYVAMRAAAAA.

Residue K24 participates in ADP-alpha-D-glucose binding.

The protein belongs to the glycosyltransferase 1 family. Bacterial/plant glycogen synthase subfamily.

The catalysed reaction is [(1-&gt;4)-alpha-D-glucosyl](n) + ADP-alpha-D-glucose = [(1-&gt;4)-alpha-D-glucosyl](n+1) + ADP + H(+). The protein operates within glycan biosynthesis; glycogen biosynthesis. Functionally, synthesizes alpha-1,4-glucan chains using ADP-glucose. The chain is Glycogen synthase from Aromatoleum aromaticum (strain DSM 19018 / LMG 30748 / EbN1) (Azoarcus sp. (strain EbN1)).